Reading from the N-terminus, the 323-residue chain is Arginase-1 (323 aa).

The disordered stretch occupies residues 1 to 27 (MSSKPKSLEIIGAPFSKGQPRGGVEKG). S7 carries the post-translational modification Phosphoserine. Residue K17 is modified to N6-succinyllysine. Phosphoserine is present on residues S62 and S72. K75 is subject to N6-succinyllysine. Mn(2+) contacts are provided by H101, D124, H126, and D128. Substrate is bound by residues 126–130 (HTDIN) and 137–139 (SGN). Phosphoserine is present on S163. D183 is a binding site for substrate. Phosphoserine is present on S217. The Mn(2+) site is built by D232 and D234. 2 residues coordinate substrate: T246 and E277. T281 is subject to Phosphothreonine.

This sequence belongs to the arginase family. As to quaternary structure, homotrimer. Interacts with CMTM6. Mn(2+) is required as a cofactor. In terms of tissue distribution, expressed in macrophages. Expressed in precursor and mature group 2 innate lymphoid cells (ILC2s). Expressed in lung tumor-associated myeloid cells. Expressed in lung tumor-infiltrating dendritic cells.

The protein localises to the cytoplasm. Its subcellular location is the cytoplasmic granule. The enzyme catalyses L-arginine + H2O = urea + L-ornithine. Its pathway is nitrogen metabolism; urea cycle; L-ornithine and urea from L-arginine: step 1/1. Key element of the urea cycle converting L-arginine to urea and L-ornithine, which is further metabolized into metabolites proline and polyamides that drive collagen synthesis and bioenergetic pathways critical for cell proliferation, respectively; the urea cycle takes place primarily in the liver and, to a lesser extent, in the kidneys. Functionally, functions in L-arginine homeostasis in nonhepatic tissues characterized by the competition between nitric oxide synthase (NOS) and arginase for the available intracellular substrate arginine. Arginine metabolism is a critical regulator of innate and adaptive immune responses. Involved in an antimicrobial effector pathway in polymorphonuclear granulocytes (PMN). Upon PMN cell death is liberated from the phagolysosome and depletes arginine in the microenvironment leading to suppressed T cell and natural killer (NK) cell proliferation and cytokine secretion. In group 2 innate lymphoid cells (ILC2s) promotes acute type 2 inflammation in the lung and is involved in optimal ILC2 proliferation but not survival. Plays a role in the immune response of alternatively activated or M2 macrophages in processes such as wound healing and tissue regeneration, immune defense against multicellular pathogens and parasites, and immune suppression and allergic inflammation; the regulatory outcome seems to be organ specific. In tumor-infiltrating dendritic cells (DCs) and myeloid-derived suppressor cells (MDSCs) plays a role in suppression of T cell-mediated antitumor immunity. The sequence is that of Arginase-1 (Arg1) from Mus musculus (Mouse).